A 206-amino-acid chain; its full sequence is Large ribosomal subunit protein uL4 (206 aa).

It belongs to the universal ribosomal protein uL4 family. As to quaternary structure, part of the 50S ribosomal subunit.

In terms of biological role, one of the primary rRNA binding proteins, this protein initially binds near the 5'-end of the 23S rRNA. It is important during the early stages of 50S assembly. It makes multiple contacts with different domains of the 23S rRNA in the assembled 50S subunit and ribosome. Functionally, forms part of the polypeptide exit tunnel. This Rhodopseudomonas palustris (strain BisB18) protein is Large ribosomal subunit protein uL4.